The chain runs to 854 residues: Discoidin domain-containing receptor 2 (854 aa).

The signal sequence occupies residues 1 to 21 (MIPIPRMPLVLLLLLLILGSA). Topologically, residues 22–399 (KAQVNPAICR…MLKVDDSNTR (378 aa)) are extracellular. Residues 30–185 (CRYPLGMSGG…VCMRVELYGC (156 aa)) form the F5/8 type C domain. Cystine bridges form between Cys30–Cys185 and Cys73–Cys177. N-linked (GlcNAc...) asparagine glycans are attached at residues Asn121, Asn213, Asn261, Asn280, and Asn372. Residues 400–421 (ILIGCLVAIIFILLAIIVIILW) traverse the membrane as a helical segment. The Cytoplasmic segment spans residues 422-854 (RQFWQKMLEK…HLLLLQQGAE (433 aa)). Residues 452 to 471 (SMFNNNRSSSPSEQESNSTY) form a disordered region. A compositionally biased stretch (low complexity) spans 455–469 (NNNRSSSPSEQESNS). Phosphotyrosine; by SRC and autocatalysis is present on Tyr471. Residues 563-848 (LAFKEKLGEG…PSFQEIHLLL (286 aa)) enclose the Protein kinase domain. ATP contacts are provided by residues 569–577 (LGEGQFGEV) and Lys608. Residue Asp709 is the Proton acceptor of the active site. 3 positions are modified to phosphotyrosine; by SRC and autocatalysis: Tyr735, Tyr739, and Tyr740.

Belongs to the protein kinase superfamily. Tyr protein kinase family. Insulin receptor subfamily. In terms of assembly, binds hydroxyproline-rich sequence motifs in fibrillar, glycosylated collagen, such as the GQOGVMGFO motif, where O stands for hydroxyproline. Interacts with SRC. Interacts (tyrosine phosphorylated) with SHC1. N-glycosylated. Post-translationally, tyrosine phosphorylated in response to collagen binding. Phosphorylated by SRC; this is required for activation and subsequent autophosphorylation on additional tyrosine residues. In terms of tissue distribution, widely expressed. Detected in lung, ovary, skin and in testis Leydig cells (at protein level). Widely expressed. Detected at high levels in heart, lung, skeletal muscle, central nervous system (CNS) and kidney, and at lower levels in brain and testis. Detected in chondrocytes in tibia growth plates of young mice.

It is found in the cell membrane. The catalysed reaction is L-tyrosyl-[protein] + ATP = O-phospho-L-tyrosyl-[protein] + ADP + H(+). With respect to regulation, present in an inactive state in the absence of collagen binding and phosphorylation by SRC. Tyrosine phosphorylation enhances the affinity for ATP and the catalytic activity. Its function is as follows. Tyrosine kinase that functions as a cell surface receptor for fibrillar collagen and regulates cell differentiation, remodeling of the extracellular matrix, cell migration and cell proliferation. Required for normal bone development. Regulates osteoblast differentiation and chondrocyte maturation via a signaling pathway that involves MAP kinases and leads to the activation of the transcription factor RUNX2. Regulates remodeling of the extracellular matrix by up-regulation of the collagenases MMP1, MMP2 and MMP13, and thereby facilitates cell migration and tumor cell invasion. Promotes fibroblast migration and proliferation, and thereby contributes to cutaneous wound healing. The sequence is that of Discoidin domain-containing receptor 2 (Ddr2) from Mus musculus (Mouse).